We begin with the raw amino-acid sequence, 214 residues long: Thymidylate kinase (214 aa).

G7–R14 is an ATP binding site. DTMP-binding residues include D9, Y39, F70, R74, R95, N100, and Y103. D9 lines the Mg(2+) pocket. The segment at G147–G159 is LID. The dTMP site is built by D163 and Y165. E166 is a binding site for Mg(2+).

This sequence belongs to the thymidylate kinase family. Homodimer. It depends on Mg(2+) as a cofactor.

The enzyme catalyses dTMP + ATP = dTDP + ADP. The protein operates within pyrimidine metabolism; dTTP biosynthesis. Functionally, catalyzes the reversible phosphorylation of deoxythymidine monophosphate (dTMP) to deoxythymidine diphosphate (dTDP), using ATP as its preferred phosphoryl donor. Situated at the junction of both de novo and salvage pathways of deoxythymidine triphosphate (dTTP) synthesis, is essential for DNA synthesis and cellular growth. This is Thymidylate kinase (tmk) from Mycobacterium tuberculosis (strain CDC 1551 / Oshkosh).